The sequence spans 381 residues: KRR1 small subunit processome component homolog (381 aa).

Residues 1-51 (MASPSLERPEKGAGKSEFRNQKPKPENQDESELLTVPDGWKEPAFSKEDNP) are disordered. An N-acetylalanine modification is found at A2. A phosphoserine mark is found at S3 and S5. Composition is skewed to basic and acidic residues over residues 7–27 (ERPE…KPEN) and 39–51 (GWKE…EDNP). A Glycyl lysine isopeptide (Lys-Gly) (interchain with G-Cter in SUMO2) cross-link involves residue K24. Residues 154-206 (KERFVKRRQRLIGPKGSTLKALELLTNCYIMVQGNTVSAIGPFSGLKEVRKVV) enclose the KH domain. The span at 250–262 (NVNKRKEPKKKTV) shows a compositional bias: basic residues. 2 disordered regions span residues 250–278 (NVNK…ESQI) and 309–338 (AISK…ASTE). Glycyl lysine isopeptide (Lys-Gly) (interchain with G-Cter in SUMO2) cross-links involve residues K340 and K369.

It belongs to the KRR1 family. As to quaternary structure, part of the small subunit (SSU) processome, composed of more than 70 proteins and the RNA chaperone small nucleolar RNA (snoRNA) U3. (Microbial infection) Directly interacts with HIV-1 protein VPR. Also identified in a complex with NR3C1 and HIV-1 protein VPR.

Its subcellular location is the nucleus. The protein localises to the nucleolus. It is found in the cytoplasm. Functionally, part of the small subunit (SSU) processome, first precursor of the small eukaryotic ribosomal subunit. During the assembly of the SSU processome in the nucleolus, many ribosome biogenesis factors, an RNA chaperone and ribosomal proteins associate with the nascent pre-rRNA and work in concert to generate RNA folding, modifications, rearrangements and cleavage as well as targeted degradation of pre-ribosomal RNA by the RNA exosome. This chain is KRR1 small subunit processome component homolog, found in Homo sapiens (Human).